We begin with the raw amino-acid sequence, 813 residues long: Cadherin-22 (813 aa).

Residues 1–33 (MRPRPAGALRAGAALSPVLLLLLLLQLLGHLWA) form the signal peptide. Residues 34-621 (ASTPAPSSLS…AFVMAASLSP (588 aa)) are Extracellular-facing. 5 Cadherin domains span residues 61-165 (WVWN…EPRF), 166-274 (LHGP…PPRF), 275-391 (PQKM…PPEF), 392-495 (RPPS…NPPE), and 496-613 (LATP…TTAF). An N-linked (GlcNAc...) asparagine glycan is attached at Asn159. Asn463 and Asn609 each carry an N-linked (GlcNAc...) asparagine glycan. A helical transmembrane segment spans residues 622–642 (GALIALLVCVLILVVLALLIL). The Cytoplasmic segment spans residues 643-813 (TLRRHHKSHL…HRGDDEAPAS (171 aa)). The segment at 696-726 (GGDPGGGAASPPQAASSSERHSLPRGPSSPE) is disordered.

As to expression, strongly expressed in the pituitary gland and the brain (in the inner granular and glomerular layers of the olfactory bulb, anterior olfactory nucleus, primary olfactory cortex, Purkinje cell layer of cerebellum, and pineal gland). Low expression in lung and heart. No expression in submandibular gland, thymus, liver, spleen, adrenal, and kidney.

Its subcellular location is the cell membrane. Functionally, cadherins are calcium-dependent cell adhesion proteins. They preferentially interact with themselves in a homophilic manner in connecting cells; cadherins may thus contribute to the sorting of heterogeneous cell types. PB-cadherins may have a role in the morphological organization of pituitary gland and brain tissues. This chain is Cadherin-22 (Cdh22), found in Rattus norvegicus (Rat).